A 337-amino-acid polypeptide reads, in one-letter code: DNA-directed RNA polymerase subunit alpha (337 aa).

The tract at residues 1–233 (MIQKNWQELI…DQLSVFVNFK (233 aa)) is alpha N-terminal domain (alpha-NTD). The segment at 249–337 (FNPALLKKVD…DLAKHYEDQY (89 aa)) is alpha C-terminal domain (alpha-CTD).

Belongs to the RNA polymerase alpha chain family. In terms of assembly, homodimer. The RNAP catalytic core consists of 2 alpha, 1 beta, 1 beta' and 1 omega subunit. When a sigma factor is associated with the core the holoenzyme is formed, which can initiate transcription.

The catalysed reaction is RNA(n) + a ribonucleoside 5'-triphosphate = RNA(n+1) + diphosphate. Functionally, DNA-dependent RNA polymerase catalyzes the transcription of DNA into RNA using the four ribonucleoside triphosphates as substrates. This is DNA-directed RNA polymerase subunit alpha from Bartonella bacilliformis (strain ATCC 35685 / KC583 / Herrer 020/F12,63).